The following is a 510-amino-acid chain: Cytochrome P450 90D2 (510 aa).

Residues 6 to 26 (MVGSGGVYSWPAALLVAAIVV) form a helical membrane-spanning segment. C444 is a binding site for heme.

The protein belongs to the cytochrome P450 family. Heme is required as a cofactor.

It is found in the membrane. The enzyme catalyses 3-epi-6-deoxocathasterone + reduced [NADPH--hemoprotein reductase] + O2 = 6-deoxotyphasterol + oxidized [NADPH--hemoprotein reductase] + H2O + H(+). It carries out the reaction (22S,24R)-22-hydroxy-5alpha-ergostan-3-one + reduced [NADPH--hemoprotein reductase] + O2 = 3-dehydro-6-deoxoteasterone + oxidized [NADPH--hemoprotein reductase] + H2O + H(+). The catalysed reaction is 6-deoxycathasterone + reduced [NADPH--hemoprotein reductase] + O2 = 6-deoxoteasterone + oxidized [NADPH--hemoprotein reductase] + H2O + H(+). The protein operates within plant hormone biosynthesis; brassinosteroid biosynthesis. Involved in reduction steps of the biosynthesis of plant campesterol-derivative steroids, ending to castasterone (CS) but missing brassinolide (BL). Catalyzes the conversion of (22S,24R)-22-hydroxy-5alpha-ergostan-3-one (22-hydroxy-campesta-3-one, 22-OH-3-one) to 3-dehydro-6-deoxoteasterone (6-deoxo3DT, 6-deoxo-3-DHT), 3-epi-6-deoxocathasterone (3-epi-6-deoxoCT) to 6-deoxotyphasterol (6-deoxoTY) and of 6-deoxocathasterone (6-deoxoCT) to 6-deoxoteasterone (6-deoxoTE). The sequence is that of Cytochrome P450 90D2 from Brachypodium distachyon (Purple false brome).